Reading from the N-terminus, the 144-residue chain is Large ribosomal subunit protein uL11 (144 aa).

Belongs to the universal ribosomal protein uL11 family. As to quaternary structure, part of the ribosomal stalk of the 50S ribosomal subunit. Interacts with L10 and the large rRNA to form the base of the stalk. L10 forms an elongated spine to which L12 dimers bind in a sequential fashion forming a multimeric L10(L12)X complex. Post-translationally, one or more lysine residues are methylated.

Functionally, forms part of the ribosomal stalk which helps the ribosome interact with GTP-bound translation factors. The protein is Large ribosomal subunit protein uL11 of Francisella tularensis subsp. mediasiatica (strain FSC147).